The following is a 901-amino-acid chain: Protein translocase subunit SecA (901 aa).

Residues Gln85, Gly103–Thr107, and Asp492 each bind ATP. The segment at Gly828–Arg901 is disordered. The span at Asp871 to Arg881 shows a compositional bias: basic and acidic residues. A compositionally biased stretch (basic residues) spans Ala882–Arg901.

It belongs to the SecA family. In terms of assembly, monomer and homodimer. Part of the essential Sec protein translocation apparatus which comprises SecA, SecYEG and auxiliary proteins SecDF. Other proteins may also be involved.

It is found in the cell membrane. It localises to the cytoplasm. It carries out the reaction ATP + H2O + cellular proteinSide 1 = ADP + phosphate + cellular proteinSide 2.. Functionally, part of the Sec protein translocase complex. Interacts with the SecYEG preprotein conducting channel. Has a central role in coupling the hydrolysis of ATP to the transfer of proteins into and across the cell membrane, serving as an ATP-driven molecular motor driving the stepwise translocation of polypeptide chains across the membrane. The polypeptide is Protein translocase subunit SecA (Cutibacterium acnes (strain DSM 16379 / KPA171202) (Propionibacterium acnes)).